The primary structure comprises 747 residues: Myotubularin-related protein 12 (747 aa).

Residues 205–643 form the Myotubularin phosphatase domain; sequence FDTLKDWCWE…PEIKVWAQRY (439 aa). Residues 449–558 form an interaction with MTM1 region; that stretch reads VPVFLLFLDC…KGQRKGMRFK (110 aa). S564, S601, and S716 each carry phosphoserine.

This sequence belongs to the protein-tyrosine phosphatase family. Non-receptor class myotubularin subfamily. As to quaternary structure, heterodimer with lipid phosphatase MTM1. Heterodimer with lipid phosphatase MTMR2. In terms of tissue distribution, expressed in skeletal muscles (at protein level). Ubiquitous with prominent expression in brain, heart, kidney, placenta, and lung.

The protein resides in the cytoplasm. Its subcellular location is the sarcoplasmic reticulum. The protein localises to the myofibril. It is found in the sarcomere. Functionally, acts as an adapter for the myotubularin-related phosphatases. Regulates phosphatase MTM1 protein stability and possibly its intracellular location. By stabilizing MTM1 protein levels, required for skeletal muscle maintenance but not for myogenesis. This Homo sapiens (Human) protein is Myotubularin-related protein 12 (MTMR12).